The following is a 134-amino-acid chain: Profilin (134 aa).

It belongs to the profilin family. Occurs in many kinds of cells as a complex with monomeric actin in a 1:1 ratio.

It is found in the cytoplasm. The protein localises to the cytoskeleton. In terms of biological role, binds to actin and affects the structure of the cytoskeleton. At high concentrations, profilin prevents the polymerization of actin, whereas it enhances it at low concentrations. By binding to PIP2, it inhibits the formation of IP3 and DG. The chain is Profilin from Brassica napus (Rape).